Consider the following 540-residue polypeptide: CUB domain-containing protein 2 (540 aa).

The N-terminal stretch at 1-24 (MLAELGACLLLAMVLLDSDPGTQA) is a signal peptide. Residues 25 to 516 (MEGVKCGGVL…GTMVTQDTSD (492 aa)) lie on the Extracellular side of the membrane. 6 disulfide bridges follow: Cys30-Cys56, Cys83-Cys106, Cys145-Cys171, Cys198-Cys218, Cys257-Cys283, and Cys314-Cys336. 3 CUB domains span residues 30-143 (CGGV…YQKD), 145-255 (CGGV…YFSG), and 257-373 (CQEV…YIGV). An N-linked (GlcNAc...) asparagine glycan is attached at Asn40. Residue Asn267 is glycosylated (N-linked (GlcNAc...) asparagine). Asn377, Asn435, and Asn436 each carry an N-linked (GlcNAc...) asparagine glycan. The helical transmembrane segment at 517–537 (IVFLGLCILAGVLMIIAIVVL) threads the bilayer. The Cytoplasmic segment spans residues 538–540 (MLL).

It localises to the membrane. The polypeptide is CUB domain-containing protein 2 (Cdcp2) (Mus musculus (Mouse)).